The chain runs to 398 residues: Ornithine aminotransferase (398 aa).

N6-(pyridoxal phosphate)lysine is present on K255.

The protein belongs to the class-III pyridoxal-phosphate-dependent aminotransferase family. OAT subfamily. It depends on pyridoxal 5'-phosphate as a cofactor.

It localises to the cytoplasm. The enzyme catalyses a 2-oxocarboxylate + L-ornithine = L-glutamate 5-semialdehyde + an L-alpha-amino acid. It participates in amino-acid biosynthesis; L-proline biosynthesis; L-glutamate 5-semialdehyde from L-ornithine: step 1/1. In terms of biological role, catalyzes the interconversion of ornithine to glutamate semialdehyde. In Geobacillus sp. (strain WCH70), this protein is Ornithine aminotransferase.